We begin with the raw amino-acid sequence, 41 residues long: MTPMRITVWRERLQQMRPQRKLLKQTQQRRLLHQLQQRKLL.

Functionally, involved in viral RNA replication. In Potato leafroll virus (strain Potato/Scotland/strain 1/1984) (PLrV), this protein is Replication-associated protein.